The primary structure comprises 237 residues: RNA chaperone ProQ (237 aa).

The interval 106-188 (AKARVQAQRA…QPRPVPVTDI (83 aa)) is disordered. Residues 146–158 (PRREAGAAPENRK) show a composition bias toward basic and acidic residues.

Belongs to the ProQ family.

The protein resides in the cytoplasm. RNA chaperone with significant RNA binding, RNA strand exchange and RNA duplexing activities. May regulate ProP activity through an RNA-based, post-transcriptional mechanism. This Yersinia pseudotuberculosis serotype O:1b (strain IP 31758) protein is RNA chaperone ProQ.